We begin with the raw amino-acid sequence, 211 residues long: MSSEQGNGSNPSTSPEVEGTKTIPFRRRLQRGQRVFAPKLMEALRRSRVSSEEAPVRHLSRRWRATTAQKVYSLKLYDALQRSRRSATVRDTADKVLATTARGATRWSRAILVSRFGTSLRRRRNTKPASALAAAIRGSGGSGRRRKLSAVGNRVRVLGGLVPGCRRTALPELLDETADYIAALEMQVRAMTALSKILSELQPSTNLGSAL.

The span at 1–15 (MSSEQGNGSNPSTSP) shows a compositional bias: polar residues. The interval 1–23 (MSSEQGNGSNPSTSPEVEGTKTI) is disordered. In terms of domain architecture, bHLH spans 135-184 (AIRGSGGSGRRRKLSAVGNRVRVLGGLVPGCRRTALPELLDETADYIAAL).

As to quaternary structure, homodimer. Interacts with PRE3 and ASK7. In terms of processing, phosphorylated by ASK7.

It is found in the nucleus. In terms of biological role, atypical bHLH transcription factor probably unable to bind DNA. Negatively regulates brassinosteroid signaling. This Arabidopsis thaliana (Mouse-ear cress) protein is Transcription factor bHLH150 (BHLH150).